The sequence spans 350 residues: Protein-glutamate methylesterase/protein-glutamine glutaminase (350 aa).

Residues 5–122 form the Response regulatory domain; the sequence is TVLCVDDSAL…REGMLAYSEL (118 aa). Aspartate 56 carries the 4-aspartylphosphate modification. The region spanning 153 to 345 is the CheB-type methylesterase domain; it reads LLSSEKLIAV…KRMLAKISSG (193 aa). Residues serine 165, histidine 191, and aspartate 287 contribute to the active site.

The protein belongs to the CheB family. Phosphorylated by CheA. Phosphorylation of the N-terminal regulatory domain activates the methylesterase activity.

The protein resides in the cytoplasm. The catalysed reaction is [protein]-L-glutamate 5-O-methyl ester + H2O = L-glutamyl-[protein] + methanol + H(+). It catalyses the reaction L-glutaminyl-[protein] + H2O = L-glutamyl-[protein] + NH4(+). Functionally, involved in chemotaxis. Part of a chemotaxis signal transduction system that modulates chemotaxis in response to various stimuli. Catalyzes the demethylation of specific methylglutamate residues introduced into the chemoreceptors (methyl-accepting chemotaxis proteins or MCP) by CheR. Also mediates the irreversible deamidation of specific glutamine residues to glutamic acid. In Photorhabdus laumondii subsp. laumondii (strain DSM 15139 / CIP 105565 / TT01) (Photorhabdus luminescens subsp. laumondii), this protein is Protein-glutamate methylesterase/protein-glutamine glutaminase.